Reading from the N-terminus, the 138-residue chain is ATP synthase epsilon chain (138 aa).

This sequence belongs to the ATPase epsilon chain family. In terms of assembly, F-type ATPases have 2 components, CF(1) - the catalytic core - and CF(0) - the membrane proton channel. CF(1) has five subunits: alpha(3), beta(3), gamma(1), delta(1), epsilon(1). CF(0) has three main subunits: a, b and c.

The protein resides in the cell membrane. Functionally, produces ATP from ADP in the presence of a proton gradient across the membrane. The polypeptide is ATP synthase epsilon chain (Polynucleobacter asymbioticus (strain DSM 18221 / CIP 109841 / QLW-P1DMWA-1) (Polynucleobacter necessarius subsp. asymbioticus)).